We begin with the raw amino-acid sequence, 222 residues long: Peptide methionine sulfoxide reductase MsrA (222 aa).

C60 is a catalytic residue.

The protein belongs to the MsrA Met sulfoxide reductase family.

It catalyses the reaction L-methionyl-[protein] + [thioredoxin]-disulfide + H2O = L-methionyl-(S)-S-oxide-[protein] + [thioredoxin]-dithiol. The enzyme catalyses [thioredoxin]-disulfide + L-methionine + H2O = L-methionine (S)-S-oxide + [thioredoxin]-dithiol. In terms of biological role, has an important function as a repair enzyme for proteins that have been inactivated by oxidation. Catalyzes the reversible oxidation-reduction of methionine sulfoxide in proteins to methionine. The sequence is that of Peptide methionine sulfoxide reductase MsrA from Pseudomonas entomophila (strain L48).